Here is a 388-residue protein sequence, read N- to C-terminus: MPGPQGGTGAPSMSLGKLSPVGWVPSSHGKRRLTADMISPPLGDFRHTMHVGRGGDVFGDTSFLSNHGGRSGNTHRSPRSFLARKLQQVRRVGVPPRRMASPAATSPAPPPISPIIKNAISLPQLNQATYDSLVVSKLSFDSTPASSTDGRSGYGLESGFCTISRLPRVEKHSSRDRDHDRDPDHSQDREQSSSPSEPNPNPELRRSDSLLSFRFDLDLGPSLLSELLGVMSLSEAPAANPPAPAANPAPTAKPPADAVTTLDTVTSLPAPTASSPSSGRFPNGVTAVLGPVAEVKASPVGEGPQVPSKMAFDRRGASWGAIRASRHYTEMDARRELAGVLPQVHGSWESLNEEWSAPPASSRAPVPSTVQANAFEFADADEDDEVKV.

A disordered region spans residues Met-1 to His-28. Ser-19 and Ser-27 each carry phosphoserine. The residue at position 34 (Thr-34) is a Phosphothreonine. Residues Ile-38–Gly-52 enclose the CRIB domain. Ser-39 carries the post-translational modification Phosphoserine. The residue at position 53 (Arg-53) is an Omega-N-methylarginine. Residues Ser-65, Ser-77, Ser-101, Ser-113, Ser-121, and Ser-139 each carry the phosphoserine modification. Residues Arg-165–Arg-206 are disordered. A compositionally biased stretch (basic and acidic residues) spans Pro-167–Gln-191. Residues Ser-193, Ser-207, Ser-209, and Ser-212 each carry the phosphoserine modification. Tandem repeats lie at residues Pro-237–Ala-243 and Pro-250–Ala-256. Residues Pro-237–Asp-257 are disordered. Residues Pro-237–Ala-270 are 2 X 7 AA tandem repeats of [PT]-[AT]-A-[ENT]-[PT]-[PTS]-[AG]. Residues Ala-239–Lys-253 show a composition bias toward pro residues. A phosphoserine mark is found at Ser-298, Ser-318, Ser-347, and Ser-350.

This sequence belongs to the BORG/CEP family. Interacts with RHOQ and CDC42, in a GTP-dependent manner.

It localises to the endomembrane system. It is found in the cytoplasm. Its subcellular location is the cytoskeleton. Functionally, probably involved in the organization of the actin cytoskeleton. Induced membrane extensions in fibroblasts. The protein is Cdc42 effector protein 1 of Rattus norvegicus (Rat).